We begin with the raw amino-acid sequence, 414 residues long: Probable uracil permease (414 aa).

The Cytoplasmic portion of the chain corresponds to 1-14; it reads MTNQIPPSLAENQS. Residues 15–38 traverse the membrane as a helical segment; the sequence is KLKQSFVGLQMLFVAFGALVLVPL. At 39 to 42 the chain is on the periplasmic side; that stretch reads ITGL. The helical transmembrane segment at 43 to 62 threads the bilayer; that stretch reads DSNTALLTAGVGTLLFQFCT. Residues 63–65 are Cytoplasmic-facing; it reads GKQ. A discontinuously helical membrane pass occupies residues 66–82; it reads VPIFLASSFAFIAPIQY. Residue F74 participates in uracil binding. At 83–91 the chain is on the periplasmic side; the sequence is GVQTWGIAT. Residues 92 to 112 form a helical membrane-spanning segment; that stretch reads TMGGLAFTGLVYFALSTLVKL. The Cytoplasmic segment spans residues 113–124; it reads RGAEALQRFFPP. Residues 125–146 traverse the membrane as a helical segment; it reads VVVGPVIIIIGMGLAPIAVDMS. Residues 147 to 155 are Periplasmic-facing; it reads LGKNSAYAY. The chain crosses the membrane as a helical span at residues 156–171; the sequence is NDAVLVSMVTLLTTLS. Residues 172 to 178 lie on the Cytoplasmic side of the membrane; sequence VAVFAKG. Residues 179-199 traverse the membrane as a helical segment; it reads LMKLIPIMFGITAGYILCLFL. Over 200–224 the chain is Periplasmic; sequence GLINFQPVIDAPWFSLPKLTTPEFN. The chain crosses the membrane as a helical span at residues 225 to 248; it reads LEAILYMLPIAIAPAVEHVGGIMA. E241 contributes to the uracil binding site. The Cytoplasmic segment spans residues 249 to 261; sequence ISSVTGKDFLKKP. Residues 262–281 form a helical membrane-spanning segment; it reads GLHRTLLGDGIATAAASLVG. Residues 282–298 form a discontinuously helical membrane-spanning segment; the sequence is GPPNTTYAEVTGAVMLT. Residue E290 participates in uracil binding. Topologically, residues 299–301 are cytoplasmic; that stretch reads RNF. The chain crosses the membrane as a helical span at residues 302–319; that stretch reads NPNIMTWAAVWAIAISFC. The Periplasmic segment spans residues 320 to 332; the sequence is GKVGAFLSTIPTI. The chain crosses the membrane as a helical span at residues 333–354; it reads VMGGIMMLVFGSIAVVGMSTLI. Residues 355 to 365 are Cytoplasmic-facing; sequence RGKVDVTEARN. Positions 366-401 form an intramembrane region, discontinuously helical; sequence LCIISVVMTFGIGNMFVDVGNVSLKGISLCAIVAII. Residues 402–414 lie on the Cytoplasmic side of the membrane; it reads LNLVLPKAKNEVE.

This sequence belongs to the nucleobase:cation symporter-2 (NCS2) (TC 2.A.40) family.

Its subcellular location is the cell inner membrane. The catalysed reaction is uracil(in) + H(+)(in) = uracil(out) + H(+)(out). Transport of uracil in the cell. The polypeptide is Probable uracil permease (uraA) (Haemophilus influenzae (strain ATCC 51907 / DSM 11121 / KW20 / Rd)).